A 673-amino-acid chain; its full sequence is DNA ligase (673 aa).

Residues 36-40 (DSEYD), 85-86 (SL), and glutamate 118 contribute to the NAD(+) site. The active-site N6-AMP-lysine intermediate is lysine 120. NAD(+) is bound by residues arginine 141, glutamate 178, lysine 295, and lysine 319. Zn(2+)-binding residues include cysteine 413, cysteine 416, cysteine 431, and cysteine 437. The 78-residue stretch at 596–673 (VRDNPLKGKT…SENEFLALLA (78 aa)) folds into the BRCT domain.

The protein belongs to the NAD-dependent DNA ligase family. LigA subfamily. It depends on Mg(2+) as a cofactor. Requires Mn(2+) as cofactor.

It catalyses the reaction NAD(+) + (deoxyribonucleotide)n-3'-hydroxyl + 5'-phospho-(deoxyribonucleotide)m = (deoxyribonucleotide)n+m + AMP + beta-nicotinamide D-nucleotide.. In terms of biological role, DNA ligase that catalyzes the formation of phosphodiester linkages between 5'-phosphoryl and 3'-hydroxyl groups in double-stranded DNA using NAD as a coenzyme and as the energy source for the reaction. It is essential for DNA replication and repair of damaged DNA. The chain is DNA ligase from Histophilus somni (strain 129Pt) (Haemophilus somnus).